Reading from the N-terminus, the 388-residue chain is Succinate--CoA ligase [ADP-forming] subunit beta (388 aa).

Residues 9-244 (KSLFAEYGLP…PSQDDAREAH (236 aa)) enclose the ATP-grasp domain. Residues Lys46, 53 to 55 (GRG), Glu99, Thr102, and Glu107 each bind ATP. Residues Asn199 and Asp213 each coordinate Mg(2+). Substrate is bound by residues Asn264 and 321-323 (GIV).

The protein belongs to the succinate/malate CoA ligase beta subunit family. Heterotetramer of two alpha and two beta subunits. Requires Mg(2+) as cofactor.

It catalyses the reaction succinate + ATP + CoA = succinyl-CoA + ADP + phosphate. The enzyme catalyses GTP + succinate + CoA = succinyl-CoA + GDP + phosphate. It functions in the pathway carbohydrate metabolism; tricarboxylic acid cycle; succinate from succinyl-CoA (ligase route): step 1/1. Succinyl-CoA synthetase functions in the citric acid cycle (TCA), coupling the hydrolysis of succinyl-CoA to the synthesis of either ATP or GTP and thus represents the only step of substrate-level phosphorylation in the TCA. The beta subunit provides nucleotide specificity of the enzyme and binds the substrate succinate, while the binding sites for coenzyme A and phosphate are found in the alpha subunit. The sequence is that of Succinate--CoA ligase [ADP-forming] subunit beta from Shewanella sp. (strain MR-4).